The primary structure comprises 198 residues: Glycerol-3-phosphate acyltransferase (198 aa).

Transmembrane regions (helical) follow at residues 4–24 (LALIMIIIAYLLGSISSAVLI), 53–75 (SAAGLVLLCDILKGMLPVWGGYF), 80–102 (PFMLGIIAISACLGHMYPLFFHF), 112–132 (LGALAPIGLDLTGMLFGCWVV), and 134–154 (VLVTGYSSLASMITALLAPLF).

This sequence belongs to the PlsY family. In terms of assembly, probably interacts with PlsX.

It localises to the cell inner membrane. The catalysed reaction is an acyl phosphate + sn-glycerol 3-phosphate = a 1-acyl-sn-glycero-3-phosphate + phosphate. It functions in the pathway lipid metabolism; phospholipid metabolism. In terms of biological role, catalyzes the transfer of an acyl group from acyl-phosphate (acyl-PO(4)) to glycerol-3-phosphate (G3P) to form lysophosphatidic acid (LPA). This enzyme utilizes acyl-phosphate as fatty acyl donor, but not acyl-CoA or acyl-ACP. The sequence is that of Glycerol-3-phosphate acyltransferase from Aliivibrio fischeri (strain ATCC 700601 / ES114) (Vibrio fischeri).